The chain runs to 396 residues: Major outer membrane porin, serovar A (396 aa).

Residues 1–22 form the signal peptide; it reads MKKLLKSVLVFAALSSASSLQA.

It belongs to the chlamydial porin (CP) (TC 1.B.2) family. As to quaternary structure, part of a disulfide cross-linked outer membrane complex (COMC) composed of the major outer membrane porin (MOMP), the small cysteine-rich protein (OmcA) and the large cysteine-rich periplasmic protein (OmcB).

The protein localises to the cell outer membrane. In elementary bodies (EBs, the infectious stage, which is able to survive outside the host cell) provides the structural integrity of the outer envelope through disulfide cross-links with the small cysteine-rich protein and the large cysteine-rich periplasmic protein. It has been described in publications as the Sarkosyl-insoluble COMC (Chlamydia outer membrane complex), and serves as the functional equivalent of peptidoglycan. In terms of biological role, permits diffusion of specific solutes through the outer membrane. This is Major outer membrane porin, serovar A (ompA) from Chlamydia trachomatis.